A 506-amino-acid chain; its full sequence is Cysteine--tRNA ligase (506 aa).

Cys34 contributes to the Zn(2+) binding site. The 'HIGH' region motif lies at 36-46 (PTVYDFAHIGN). Residues Cys230, His269, and Glu273 each coordinate Zn(2+). A 'KMSKS' region motif is present at residues 302–306 (KMSKS). Lys305 lines the ATP pocket.

The protein belongs to the class-I aminoacyl-tRNA synthetase family. As to quaternary structure, monomer. The cofactor is Zn(2+).

The protein localises to the cytoplasm. The enzyme catalyses tRNA(Cys) + L-cysteine + ATP = L-cysteinyl-tRNA(Cys) + AMP + diphosphate. This Brucella suis biovar 1 (strain 1330) protein is Cysteine--tRNA ligase.